Reading from the N-terminus, the 318-residue chain is Trans-prenyltransferase (318 aa).

The chain crosses the membrane as a helical span at residues 1 to 21 (MLHLIYISIIVVLIIILISYT). 3 residues coordinate isopentenyl diphosphate: Lys-85, Arg-88, and His-122. Mg(2+)-binding residues include Asp-129 and Asp-135. Dimethylallyl diphosphate is bound at residue Arg-140. Isopentenyl diphosphate is bound at residue Arg-141. The dimethylallyl diphosphate site is built by Lys-216, Thr-217, and Gln-254.

This sequence belongs to the FPP/GGPP synthase family. Asfivirus trans-prenyltransferase subfamily. Mg(2+) serves as cofactor.

Its subcellular location is the host endoplasmic reticulum. It localises to the host membrane. It catalyses the reaction isopentenyl diphosphate + dimethylallyl diphosphate = (2E)-geranyl diphosphate + diphosphate. It carries out the reaction isopentenyl diphosphate + (2E)-geranyl diphosphate = (2E,6E)-farnesyl diphosphate + diphosphate. The enzyme catalyses isopentenyl diphosphate + (2E,6E)-farnesyl diphosphate = (2E,6E,10E)-geranylgeranyl diphosphate + diphosphate. The catalysed reaction is isopentenyl diphosphate + (2E,6E,10E)-geranylgeranyl diphosphate = (2E,6E,10E,14E)-geranylfarnesyl diphosphate + diphosphate. Its pathway is isoprenoid biosynthesis; farnesyl diphosphate biosynthesis; farnesyl diphosphate from geranyl diphosphate and isopentenyl diphosphate: step 1/1. It functions in the pathway isoprenoid biosynthesis; geranyl diphosphate biosynthesis; geranyl diphosphate from dimethylallyl diphosphate and isopentenyl diphosphate: step 1/1. It participates in isoprenoid biosynthesis; geranylgeranyl diphosphate biosynthesis; geranylgeranyl diphosphate from farnesyl diphosphate and isopentenyl diphosphate: step 1/1. Its function is as follows. Trans-prenyltransferase that catalyzes the sequential condensation of isopentenyl diphosphate (IPP) with different allylic diphosphates, such as dimethylallyl diphosphate (DMAPP), geranyl diphosphate (GPP), farnesyl diphosphate (FPP) and geranylgeranyl diphosphate (GGPP), farnesyl diphosphate being the best allylic substrate. In African swine fever virus (isolate Tick/Malawi/Lil 20-1/1983) (ASFV), this protein is Trans-prenyltransferase.